The following is a 435-amino-acid chain: Citrate synthase (435 aa).

Active-site residues include histidine 311 and aspartate 370.

It belongs to the citrate synthase family.

It carries out the reaction oxaloacetate + acetyl-CoA + H2O = citrate + CoA + H(+). It functions in the pathway carbohydrate metabolism; tricarboxylic acid cycle; isocitrate from oxaloacetate: step 1/2. The protein is Citrate synthase (gltA) of Rickettsia bellii (strain RML369-C).